A 205-amino-acid chain; its full sequence is Urease accessory protein UreG (205 aa).

Residue 14–21 (GPVGSGKT) coordinates GTP.

The protein belongs to the SIMIBI class G3E GTPase family. UreG subfamily. In terms of assembly, homodimer. UreD, UreF and UreG form a complex that acts as a GTP-hydrolysis-dependent molecular chaperone, activating the urease apoprotein by helping to assemble the nickel containing metallocenter of UreC. The UreE protein probably delivers the nickel.

The protein localises to the cytoplasm. Its function is as follows. Facilitates the functional incorporation of the urease nickel metallocenter. This process requires GTP hydrolysis, probably effectuated by UreG. The sequence is that of Urease accessory protein UreG from Escherichia coli.